Reading from the N-terminus, the 211-residue chain is PITH domain-containing protein GA19395 (211 aa).

The region spanning 20 to 192 is the PITH domain; it reads DHALEMGIEY…GVTICNYEAR (173 aa).

The protein belongs to the PITHD1 family.

This Drosophila pseudoobscura pseudoobscura (Fruit fly) protein is PITH domain-containing protein GA19395.